We begin with the raw amino-acid sequence, 549 residues long: Probable glucomannan 4-beta-mannosyltransferase 4 (549 aa).

A helical membrane pass occupies residues 35 to 55 (VAPVLQFAVWACMAMSVMLVL). D151 is an active-site residue. Substrate contacts are provided by D210 and D212. Residue D304 is part of the active site. The next 4 membrane-spanning stretches (helical) occupy residues 383–403 (VVAP…SVMV), 406–426 (VSIP…MNAI), 497–517 (IYIP…YDLV), and 523–543 (YYLY…GFAG).

This sequence belongs to the glycosyltransferase 2 family. Plant cellulose synthase-like A subfamily.

It is found in the golgi apparatus membrane. The catalysed reaction is GDP-mannose + (glucomannan)n = GDP + (glucomannan)n+1.. In terms of biological role, probable mannan synthase which consists of a 4-beta-mannosyltransferase activity on mannan using GDP-mannose. The beta-1,4-mannan product is the backbone for galactomannan synthesis by galactomannan galactosyltransferase. Galactomannan is a noncellulosic polysaccharides of plant cell wall. This Oryza sativa subsp. japonica (Rice) protein is Probable glucomannan 4-beta-mannosyltransferase 4.